Here is a 432-residue protein sequence, read N- to C-terminus: Enolase (432 aa).

Residue glutamine 167 participates in (2R)-2-phosphoglycerate binding. The active-site Proton donor is the glutamate 209. Residues aspartate 246, glutamate 291, and aspartate 318 each coordinate Mg(2+). Residues lysine 343, arginine 372, serine 373, and lysine 394 each contribute to the (2R)-2-phosphoglycerate site. Catalysis depends on lysine 343, which acts as the Proton acceptor.

Belongs to the enolase family. Component of the RNA degradosome, a multiprotein complex involved in RNA processing and mRNA degradation. Requires Mg(2+) as cofactor.

It is found in the cytoplasm. The protein resides in the secreted. The protein localises to the cell surface. It carries out the reaction (2R)-2-phosphoglycerate = phosphoenolpyruvate + H2O. Its pathway is carbohydrate degradation; glycolysis; pyruvate from D-glyceraldehyde 3-phosphate: step 4/5. Functionally, catalyzes the reversible conversion of 2-phosphoglycerate (2-PG) into phosphoenolpyruvate (PEP). It is essential for the degradation of carbohydrates via glycolysis. This Aliivibrio salmonicida (strain LFI1238) (Vibrio salmonicida (strain LFI1238)) protein is Enolase.